The primary structure comprises 318 residues: NADH-ubiquinone oxidoreductase chain 1 (318 aa).

8 helical membrane-spanning segments follow: residues 2-22 (FLIN…FLTL), 69-89 (FLFT…WAPL), 102-122 (LLFI…SGWA), 146-166 (MTTI…TAFA), 171-191 (HLWL…STLA), 222-242 (LFFM…VILF), 253-273 (EIST…FLWV), and 294-314 (LPLT…LACI).

The protein belongs to the complex I subunit 1 family.

It localises to the mitochondrion inner membrane. It carries out the reaction a ubiquinone + NADH + 5 H(+)(in) = a ubiquinol + NAD(+) + 4 H(+)(out). Its function is as follows. Core subunit of the mitochondrial membrane respiratory chain NADH dehydrogenase (Complex I) that is believed to belong to the minimal assembly required for catalysis. Complex I functions in the transfer of electrons from NADH to the respiratory chain. The immediate electron acceptor for the enzyme is believed to be ubiquinone. This chain is NADH-ubiquinone oxidoreductase chain 1 (MT-ND1), found in Mammuthus primigenius (Siberian woolly mammoth).